Consider the following 319-residue polypeptide: Cell division protein FtsN (319 aa).

The disordered stretch occupies residues 1–30 (MAQRDYVRRSQPAPSRRKKSTSRKKQRNLP). The Cytoplasmic segment spans residues 1–33 (MAQRDYVRRSQPAPSRRKKSTSRKKQRNLPAVS). The tract at residues 4–6 (RDY) is mediates interaction with FtsA. The span at 15–27 (SRRKKSTSRKKQR) shows a compositional bias: basic residues. Residues 34-54 (PAMVAIAAAVLVTFIGGLYFI) form a helical membrane-spanning segment. At 55 to 319 (THHKKEESET…TNCIRLAAGG (265 aa)) the chain is on the periplasmic side. Disordered stretches follow at residues 60-79 (EESE…PPKP) and 89-113 (LESR…TPEQ). 4 repeat units span residues 115–120 (TPEQRQ), 145–150 (TPEQRQ), 197–200 (QSKP), and 220–223 (QSKP). The tract at residues 115-150 (TPEQRQLLEQMQADMRQQPTQLVEVPWNEQTPEQRQ) is 2 X 6 AA repeats. Positions 140–245 (PWNEQTPEQR…PKPTAEKKDE (106 aa)) are disordered. Low complexity predominate over residues 143–171 (EQTPEQRQQTLQRQRQAQQLAEQQRLAQQ). The segment covering 172–221 (SRTTEQSWQQQTRTSQAAPVQAQPRQSKPASSQQPYQDLLQTPAHTTAQS) has biased composition (polar residues). The 2 X 4 AA repeats stretch occupies residues 197–223 (QSKPASSQQPYQDLLQTPAHTTAQSKP). Over residues 222–238 (KPQQAAPVARAADAPKP) the composition is skewed to low complexity. Residues 242–316 (KKDERRWMVQ…AGHTNCIRLA (75 aa)) enclose the SPOR domain. Cys252 and Cys312 are disulfide-bonded.

It belongs to the FtsN family. In terms of assembly, interacts with FtsA via its N-terminal cytoplasmic domain. Interacts with ZapA, FtsQ, FtsW and FtsI.

Its subcellular location is the cell inner membrane. Functionally, essential cell division protein that activates septal peptidoglycan synthesis and constriction of the cell. Acts on both sides of the membrane, via interaction with FtsA in the cytoplasm and interaction with the FtsQBL complex in the periplasm. These interactions may induce a conformational switch in both FtsA and FtsQBL, leading to septal peptidoglycan synthesis by FtsI and associated synthases. Required for full FtsI activity. Required for recruitment of AmiC to the septal ring. The chain is Cell division protein FtsN from Escherichia coli (strain K12).